The primary structure comprises 145 residues: Deoxyuridine 5'-triphosphate nucleotidohydrolase (145 aa).

Substrate is bound by residues 65-67 (RSG), Asn-78, and 82-84 (TID).

Belongs to the dUTPase family. It depends on Mg(2+) as a cofactor.

The enzyme catalyses dUTP + H2O = dUMP + diphosphate + H(+). Its pathway is pyrimidine metabolism; dUMP biosynthesis; dUMP from dCTP (dUTP route): step 2/2. In terms of biological role, this enzyme is involved in nucleotide metabolism: it produces dUMP, the immediate precursor of thymidine nucleotides and it decreases the intracellular concentration of dUTP so that uracil cannot be incorporated into DNA. The chain is Deoxyuridine 5'-triphosphate nucleotidohydrolase from Clostridium tetani (strain Massachusetts / E88).